The sequence spans 93 residues: Large ribosomal subunit protein uL23cz/uL23cy (93 aa).

This sequence belongs to the universal ribosomal protein uL23 family. As to quaternary structure, part of the 50S ribosomal subunit.

The protein resides in the plastid. The protein localises to the chloroplast. Its function is as follows. Binds to 23S rRNA. In Lotus japonicus (Lotus corniculatus var. japonicus), this protein is Large ribosomal subunit protein uL23cz/uL23cy (rpl23-A).